The following is a 401-amino-acid chain: Nodulation protein E (401 aa).

Residues 2–400 form the Ketosynthase family 3 (KS3) domain; that stretch reads DRRVVITGIG…GTNAVLAFRQ (399 aa). Active-site for beta-ketoacyl synthase activity residues include C162, H294, and H331. The helical transmembrane segment at 329–348 threads the bilayer; it reads HAHCLGAASALEMIACVMAI.

This sequence belongs to the thiolase-like superfamily. Beta-ketoacyl-ACP synthases family.

The protein resides in the cell inner membrane. Its function is as follows. Proposed to synthesize NOD factor fatty acyl chain. Involved in the synthesis of a highly unsaturated fatty acid moiety, which forms part of a lipo-oligosaccharide that is responsible for host specificity. This is Nodulation protein E (nodE) from Rhizobium leguminosarum bv. trifolii.